We begin with the raw amino-acid sequence, 173 residues long: Putative metal-dependent hydrolase BcerKBAB4_2443 (173 aa).

Positions 65, 156, and 160 each coordinate Zn(2+).

Belongs to the metal hydrolase YfiT family. Homodimer. Zn(2+) serves as cofactor.

Its subcellular location is the cytoplasm. Its function is as follows. Possible metal-dependent hydrolase. In Bacillus mycoides (strain KBAB4) (Bacillus weihenstephanensis), this protein is Putative metal-dependent hydrolase BcerKBAB4_2443.